The chain runs to 142 residues: Histone H2B (142 aa).

A compositionally biased stretch (basic and acidic residues) spans 1-10; sequence MPPKPAEKKP. The interval 1–50 is disordered; it reads MPPKPAEKKPSSTAGKAPASSAGKAPAEAAKKTSKAPAKSGEKKKATKVR. N6-acetyllysine; alternate occurs at positions 8 and 9. Glycyl lysine isopeptide (Lys-Gly) (interchain with G-Cter in SUMO); alternate cross-links involve residues lysine 8 and lysine 9. Residues 11-28 are compositionally biased toward low complexity; it reads SSTAGKAPASSAGKAPAE. Lysine 24 is modified (N6-acetyllysine). Over residues 40 to 50 the composition is skewed to basic and acidic residues; the sequence is SGEKKKATKVR. Lysine 137 participates in a covalent cross-link: Glycyl lysine isopeptide (Lys-Gly) (interchain with G-Cter in ubiquitin).

The protein belongs to the histone H2B family. As to quaternary structure, the nucleosome is a histone octamer containing two molecules each of H2A, H2B, H3 and H4 assembled in one H3-H4 heterotetramer and two H2A-H2B heterodimers. The octamer wraps approximately 147 bp of DNA. Monoubiquitinated by the UBC2-BRE1 complex to form H2BK123ub1. H2BK123ub1 gives a specific tag for epigenetic transcriptional activation and is also prerequisite for H3K4me and H3K79me formation. H2BK123ub1 also modulates the formation of double-strand breaks during meiosis and is a prerequisite for DNA-damage checkpoint activation. In terms of processing, acetylation of N-terminal lysines and particularly formation of H2BK11ac has a positive effect on transcription. Post-translationally, sumoylation to form H2BK6su or H2BK7su occurs preferentially near the telomeres and represses gene transcription.

It is found in the nucleus. The protein resides in the chromosome. In terms of biological role, core component of nucleosome. Nucleosomes wrap and compact DNA into chromatin, limiting DNA accessibility to the cellular machineries which require DNA as a template. Histones thereby play a central role in transcription regulation, DNA repair, DNA replication and chromosomal stability. DNA accessibility is regulated via a complex set of post-translational modifications of histones, also called histone code, and nucleosome remodeling. The protein is Histone H2B (HTB1) of Mycosarcoma maydis (Corn smut fungus).